Consider the following 75-residue polypeptide: DNA-directed RNA polymerase subunit Rpo5 (75 aa).

This sequence belongs to the archaeal Rpo5/eukaryotic RPB5 RNA polymerase subunit family. Part of the RNA polymerase complex.

The protein resides in the cytoplasm. The catalysed reaction is RNA(n) + a ribonucleoside 5'-triphosphate = RNA(n+1) + diphosphate. In terms of biological role, DNA-dependent RNA polymerase (RNAP) catalyzes the transcription of DNA into RNA using the four ribonucleoside triphosphates as substrates. This Pyrobaculum aerophilum (strain ATCC 51768 / DSM 7523 / JCM 9630 / CIP 104966 / NBRC 100827 / IM2) protein is DNA-directed RNA polymerase subunit Rpo5.